The primary structure comprises 727 residues: MTVSENSVLETEVLVGGSAMPNERPGAMEPQNLSKMPEGFPRRSTVANGVRSRASRRFLVVGGALLLSLFAIYEMGAVFSIGGITPLEYLVLALFAVNFCWIALAFCSGIAGFLILLRKPRAKDLQVTELHTRTAILMPTYNESPDRVFSAVSVMAETLSQTGHGHAFDWFILSDTTDPDIALLEEQAFLVLRQETHKHSRVYYRRRRKNVARKAGNVADFCRRWGSRYDHLLVLDADSLMESSTITGLAQRMQADPDAGLIQTIPSLINGTTLMARLQQFAARIYGPVIGTGLGWWVQKEGNFWGHNAIIRTEAFMTAAGLPNLKGKPPFGGHIMSHDFVEAALIRRAGWSVVIAYDLPGSYEECPPSIIDLAVRDRRWCQGNLQHSRILPTKGLHWVSRLHLLTGIMAYLSSPFWLMLILTGLMLALQAHFIRPEYFTDQFSLFPTWPIMDSDRALRLFYITMGVLFGPKVFGVLLLLKDGEFARSVGGRIKAIFSVIFEVILSALIAPIMMFIHCGAVMSILMGRDSGWSPQRRDDGSMPWMTLIYRHRWHMLAGVMLGYAAILDSLTLLAWMSPALIGLWIAVPISAWTGSVKIGEVFKRAGILATPEERNPAQICLQAHEARAAYQKHIAEPWTLAQVLKDPALMELHLAMVDKQPLRAAGTPIEAMEAIVHVKVHEARCQQSALAVLNRQEMAMVLANPLMLRSLQKLPEQFVEEDLVSFC.

The disordered stretch occupies residues Ser-18–Glu-38. 7 helical membrane-spanning segments follow: residues Phe-58–Val-78, Val-97–Leu-117, Leu-278–Val-298, Ile-408–Ala-428, Leu-460–Leu-480, Ile-496–Ile-516, and Leu-572–Trp-592.

The protein belongs to the glycosyltransferase 2 family. OpgH subfamily.

It is found in the cell inner membrane. Its pathway is glycan metabolism; osmoregulated periplasmic glucan (OPG) biosynthesis. Involved in the biosynthesis of osmoregulated periplasmic glucans (OPGs). The protein is Glucans biosynthesis glucosyltransferase H of Shewanella baltica (strain OS185).